A 198-amino-acid polypeptide reads, in one-letter code: Probable chorismate pyruvate-lyase (198 aa).

Substrate contacts are provided by arginine 73, leucine 111, and glutamate 172.

This sequence belongs to the UbiC family.

The protein resides in the cytoplasm. The catalysed reaction is chorismate = 4-hydroxybenzoate + pyruvate. Its pathway is cofactor biosynthesis; ubiquinone biosynthesis. Functionally, removes the pyruvyl group from chorismate, with concomitant aromatization of the ring, to provide 4-hydroxybenzoate (4HB) for the ubiquinone pathway. This chain is Probable chorismate pyruvate-lyase, found in Burkholderia lata (strain ATCC 17760 / DSM 23089 / LMG 22485 / NCIMB 9086 / R18194 / 383).